A 406-amino-acid chain; its full sequence is 5-cytosine rRNA methyltransferase NSUN4 (406 aa).

8 residues coordinate S-adenosyl-L-methionine: Gly-207, Gly-208, Lys-209, Asp-226, Arg-231, Asp-259, Gly-260, and Asp-277. The Nucleophile role is filled by Cys-332.

Belongs to the class I-like SAM-binding methyltransferase superfamily. RsmB/NOP family.

The protein resides in the mitochondrion. The catalysed reaction is a cytidine in rRNA + S-adenosyl-L-methionine = a 5-methylcytidine in rRNA + S-adenosyl-L-homocysteine + H(+). The enzyme catalyses a cytidine in mRNA + S-adenosyl-L-methionine = a 5-methylcytidine in mRNA + S-adenosyl-L-homocysteine + H(+). Mitochondrial RNA cytosine C(5)-methyltransferase that methylates cytosine to 5-methylcytosine (m5C) in various RNAs, such as rRNAs, mRNAs and some long non-coding RNAs (lncRNAs). Involved in mitochondrial ribosome small subunit (SSU) maturation by catalyzing methylation of mitochondrial 12S rRNA. This is 5-cytosine rRNA methyltransferase NSUN4 (nsun4) from Xenopus laevis (African clawed frog).